Here is a 686-residue protein sequence, read N- to C-terminus: XK-related protein 5 (686 aa).

A run of 5 helical transmembrane segments spans residues 33 to 53, 205 to 225, 239 to 259, 265 to 285, and 297 to 317; these read LLWG…QALS, HFWV…WLVA, LFNL…WDSP, VTFY…ATDF, and IAGV…YYSL. Disordered regions lie at residues 339-387, 448-468, and 490-592; these read GDKT…PPEA, ALSA…LENS, and FASD…APFP. The span at 340-359 shows a compositional bias: basic and acidic residues; the sequence is DKTERRDSPRATDLAGKRTE. 2 stretches are compositionally biased toward polar residues: residues 450–468 and 490–509; these read SAQQ…LENS and FASD…TQGE. The segment covering 523–536 has biased composition (gly residues); the sequence is QGKGTGGQQRGGEG. Residues 550-567 are compositionally biased toward polar residues; it reads VATSSQQEGSPATLQTAH.

Belongs to the XK family.

It localises to the cell membrane. This Homo sapiens (Human) protein is XK-related protein 5.